The following is a 280-amino-acid chain: 3-deoxy-manno-octulosonate cytidylyltransferase (280 aa).

It belongs to the KdsB family.

Its subcellular location is the cytoplasm. It catalyses the reaction 3-deoxy-alpha-D-manno-oct-2-ulosonate + CTP = CMP-3-deoxy-beta-D-manno-octulosonate + diphosphate. Its pathway is nucleotide-sugar biosynthesis; CMP-3-deoxy-D-manno-octulosonate biosynthesis; CMP-3-deoxy-D-manno-octulosonate from 3-deoxy-D-manno-octulosonate and CTP: step 1/1. It functions in the pathway bacterial outer membrane biogenesis; lipopolysaccharide biosynthesis. Activates KDO (a required 8-carbon sugar) for incorporation into bacterial lipopolysaccharide in Gram-negative bacteria. The protein is 3-deoxy-manno-octulosonate cytidylyltransferase of Colwellia psychrerythraea (strain 34H / ATCC BAA-681) (Vibrio psychroerythus).